The sequence spans 444 residues: MRQRMSRMPSSFYIHTFGCQMNQADSEIVTALLRAEGFVPSADETNADIVLLNSCAVRENAEERLGNILMHLKGRKRRCKELVIGVLGCVPQFERERVFSDYPFVDFIVGPDNYRELAGLVAGLREAVARPALLDYDQTETYAGIEPVRAGSISAFLPVMRGCNNHCAFCVVPVTRGRERSVGFERVVAEVVALEKAGFREVTLLGQNVNSWRDAEKGLDFAGLLEGVSLAVPSMRIRFTTSHPKDISEALVKVIAARPNLCNHIHLPVQSGSSRMLDLMKRGHTREEYLDRIAMIRSYIPEVAITTDLIAGFCTETEKDHRETLSLMEAVGYDTAFMFHYSVRPGTWAARNLPDDVPDTVKKARLQEIIELQNAISREIFQREIGKTVEVLAEAESKRSESMLMGRTPENRVVVFSRGRFNPSDTLLVKITGATSATLSGEAV.

The MTTase N-terminal domain maps to 10 to 126; the sequence is SSFYIHTFGC…LAGLVAGLRE (117 aa). The [4Fe-4S] cluster site is built by cysteine 19, cysteine 55, cysteine 89, cysteine 163, cysteine 167, and cysteine 170. The region spanning 149–379 is the Radical SAM core domain; the sequence is RAGSISAFLP…IELQNAISRE (231 aa). The TRAM domain maps to 382–444; that stretch reads QREIGKTVEV…TSATLSGEAV (63 aa).

It belongs to the methylthiotransferase family. MiaB subfamily. Monomer. [4Fe-4S] cluster is required as a cofactor.

It localises to the cytoplasm. The enzyme catalyses N(6)-dimethylallyladenosine(37) in tRNA + (sulfur carrier)-SH + AH2 + 2 S-adenosyl-L-methionine = 2-methylsulfanyl-N(6)-dimethylallyladenosine(37) in tRNA + (sulfur carrier)-H + 5'-deoxyadenosine + L-methionine + A + S-adenosyl-L-homocysteine + 2 H(+). Catalyzes the methylthiolation of N6-(dimethylallyl)adenosine (i(6)A), leading to the formation of 2-methylthio-N6-(dimethylallyl)adenosine (ms(2)i(6)A) at position 37 in tRNAs that read codons beginning with uridine. The chain is tRNA-2-methylthio-N(6)-dimethylallyladenosine synthase from Chlorobaculum tepidum (strain ATCC 49652 / DSM 12025 / NBRC 103806 / TLS) (Chlorobium tepidum).